The primary structure comprises 378 residues: Ribosomal RNA large subunit methyltransferase G (378 aa).

This sequence belongs to the methyltransferase superfamily. RlmG family.

It localises to the cytoplasm. It carries out the reaction guanosine(1835) in 23S rRNA + S-adenosyl-L-methionine = N(2)-methylguanosine(1835) in 23S rRNA + S-adenosyl-L-homocysteine + H(+). Its function is as follows. Specifically methylates the guanine in position 1835 (m2G1835) of 23S rRNA. The sequence is that of Ribosomal RNA large subunit methyltransferase G from Salmonella paratyphi A (strain ATCC 9150 / SARB42).